An 87-amino-acid chain; its full sequence is Large ribosomal subunit protein eL31 (87 aa).

The protein belongs to the eukaryotic ribosomal protein eL31 family.

The protein is Large ribosomal subunit protein eL31 of Methanoculleus marisnigri (strain ATCC 35101 / DSM 1498 / JR1).